A 388-amino-acid chain; its full sequence is tRNA (guanine-N(7)-)-methyltransferase non-catalytic subunit (388 aa).

4 WD repeats span residues 58 to 102 (VEKR…KGDI), 112 to 151 (VVPK…AIEM), 153 to 194 (GAIS…DSFF), and 196 to 234 (GHTE…APRR). The segment at 365-388 (EKKKRRLNEDINGDDGEGPGPSNS) is disordered.

Belongs to the WD repeat TRM82 family. Forms a heterodimer with the catalytic subunit.

Its subcellular location is the nucleus. It functions in the pathway tRNA modification; N(7)-methylguanine-tRNA biosynthesis. Functionally, required for the formation of N(7)-methylguanine at position 46 (m7G46) in tRNA. In the complex, it is required to stabilize and induce conformational changes of the catalytic subunit. This chain is tRNA (guanine-N(7)-)-methyltransferase non-catalytic subunit, found in Caenorhabditis elegans.